We begin with the raw amino-acid sequence, 644 residues long: Threonine--tRNA ligase (644 aa).

The 61-residue stretch at 1–61 (MPDIQLPDGS…DQDAEVAIVT (61 aa)) folds into the TGS domain. A catalytic region spans residues 242–535 (DHRRIGTELE…LIEHYEGKFP (294 aa)). Positions 335, 386, and 512 each coordinate Zn(2+).

It belongs to the class-II aminoacyl-tRNA synthetase family. Homodimer. It depends on Zn(2+) as a cofactor.

Its subcellular location is the cytoplasm. It catalyses the reaction tRNA(Thr) + L-threonine + ATP = L-threonyl-tRNA(Thr) + AMP + diphosphate + H(+). Functionally, catalyzes the attachment of threonine to tRNA(Thr) in a two-step reaction: L-threonine is first activated by ATP to form Thr-AMP and then transferred to the acceptor end of tRNA(Thr). Also edits incorrectly charged L-seryl-tRNA(Thr). This chain is Threonine--tRNA ligase, found in Acidithiobacillus ferrooxidans (strain ATCC 23270 / DSM 14882 / CIP 104768 / NCIMB 8455) (Ferrobacillus ferrooxidans (strain ATCC 23270)).